Here is a 125-residue protein sequence, read N- to C-terminus: Small ribosomal subunit protein bS6 (125 aa).

The protein belongs to the bacterial ribosomal protein bS6 family.

In terms of biological role, binds together with bS18 to 16S ribosomal RNA. This Campylobacter jejuni (strain RM1221) protein is Small ribosomal subunit protein bS6.